The sequence spans 229 residues: MSKNSVIIVAAGKGKRMNSSISKQFLQIKNKPILYYTLSKFSAHESIDEIVLVTLEDKIEVCSDIIDKYNINKVSKIVPGGKERQDSVYNGLKAVSKDCEVVLIHDAARPFVTSDIIENGIRCANQYGAAACGVIPKDTIKIKNEKEFAIDTPNREDLFIVQTPQCFNYNIILDCHEKLKKHNKKVTDDTMVLENYGKSVYLYEGSYSNIKITTPEDLILGEQILEKLT.

The protein belongs to the IspD/TarI cytidylyltransferase family. IspD subfamily.

The catalysed reaction is 2-C-methyl-D-erythritol 4-phosphate + CTP + H(+) = 4-CDP-2-C-methyl-D-erythritol + diphosphate. It participates in isoprenoid biosynthesis; isopentenyl diphosphate biosynthesis via DXP pathway; isopentenyl diphosphate from 1-deoxy-D-xylulose 5-phosphate: step 2/6. In terms of biological role, catalyzes the formation of 4-diphosphocytidyl-2-C-methyl-D-erythritol from CTP and 2-C-methyl-D-erythritol 4-phosphate (MEP). The sequence is that of 2-C-methyl-D-erythritol 4-phosphate cytidylyltransferase from Clostridium botulinum (strain Langeland / NCTC 10281 / Type F).